The following is a 396-amino-acid chain: NADH-quinone oxidoreductase subunit D (396 aa).

This sequence belongs to the complex I 49 kDa subunit family. As to quaternary structure, NDH-1 is composed of 14 different subunits. Subunits NuoB, C, D, E, F, and G constitute the peripheral sector of the complex.

The protein resides in the cell inner membrane. It carries out the reaction a quinone + NADH + 5 H(+)(in) = a quinol + NAD(+) + 4 H(+)(out). In terms of biological role, NDH-1 shuttles electrons from NADH, via FMN and iron-sulfur (Fe-S) centers, to quinones in the respiratory chain. The immediate electron acceptor for the enzyme in this species is believed to be ubiquinone. Couples the redox reaction to proton translocation (for every two electrons transferred, four hydrogen ions are translocated across the cytoplasmic membrane), and thus conserves the redox energy in a proton gradient. The protein is NADH-quinone oxidoreductase subunit D of Methylorubrum populi (strain ATCC BAA-705 / NCIMB 13946 / BJ001) (Methylobacterium populi).